The primary structure comprises 505 residues: Deoxyguanosinetriphosphate triphosphohydrolase (505 aa).

The region spanning 66–273 is the HD domain; that stretch reads RLTHSMEVQQ…MEAADDISYC (208 aa).

The protein belongs to the dGTPase family. Type 1 subfamily. As to quaternary structure, homotetramer. Requires Mg(2+) as cofactor.

It carries out the reaction dGTP + H2O = 2'-deoxyguanosine + triphosphate + H(+). In terms of biological role, dGTPase preferentially hydrolyzes dGTP over the other canonical NTPs. The polypeptide is Deoxyguanosinetriphosphate triphosphohydrolase (Salmonella paratyphi A (strain AKU_12601)).